A 488-amino-acid chain; its full sequence is UDP-glycosyltransferase 85A3 (488 aa).

UDP-alpha-D-glucose contacts are provided by residues Ser306, 363–365 (CPQ), 380–388 (HCGWNSTLE), and 402–405 (FAEQ).

This sequence belongs to the UDP-glycosyltransferase family. In terms of tissue distribution, expressed in roots and flowers.

The chain is UDP-glycosyltransferase 85A3 (UGT85A3) from Arabidopsis thaliana (Mouse-ear cress).